Here is a 588-residue protein sequence, read N- to C-terminus: Adenylate kinase 5, chloroplastic (588 aa).

Positions Met1–Leu34 are disordered. The N-terminal 73 residues, Met1–Arg73, are a transit peptide targeting the chloroplast. Position 89–94 (Ala89–Thr94) interacts with ATP. The interval Ser109–Val138 is NMP. Residues Arg115, Ser136–Val138, Gly165–Arg168, and Gln172 contribute to the AMP site. Residues Gly202–Asp235 are LID. ATP is bound at residue Arg203. Residues Arg232 and Arg243 each contribute to the AMP site.

Belongs to the adenylate kinase family. In terms of assembly, monomer.

It localises to the plastid. It is found in the chloroplast. The enzyme catalyses AMP + ATP = 2 ADP. In terms of biological role, catalyzes the reversible transfer of the terminal phosphate group between ATP and AMP. The polypeptide is Adenylate kinase 5, chloroplastic (Arabidopsis thaliana (Mouse-ear cress)).